The following is a 1074-amino-acid chain: Isoleucine--tRNA ligase (1074 aa).

A 'HIGH' region motif is present at residues 50–60 (PYTSGAAHMGT). The 'KMSKS' region motif lies at 605 to 609 (GMSKS). An ATP-binding site is contributed by K608.

The protein belongs to the class-I aminoacyl-tRNA synthetase family. IleS type 2 subfamily. As to quaternary structure, monomer. Zn(2+) serves as cofactor.

The protein localises to the cytoplasm. The catalysed reaction is tRNA(Ile) + L-isoleucine + ATP = L-isoleucyl-tRNA(Ile) + AMP + diphosphate. In terms of biological role, catalyzes the attachment of isoleucine to tRNA(Ile). As IleRS can inadvertently accommodate and process structurally similar amino acids such as valine, to avoid such errors it has two additional distinct tRNA(Ile)-dependent editing activities. One activity is designated as 'pretransfer' editing and involves the hydrolysis of activated Val-AMP. The other activity is designated 'posttransfer' editing and involves deacylation of mischarged Val-tRNA(Ile). In Haloarcula marismortui (strain ATCC 43049 / DSM 3752 / JCM 8966 / VKM B-1809) (Halobacterium marismortui), this protein is Isoleucine--tRNA ligase.